A 277-amino-acid chain; its full sequence is Thiazole synthase (277 aa).

K119 serves as the catalytic Schiff-base intermediate with DXP. Residues G180, 206-207 (AG), and 228-229 (NT) contribute to the 1-deoxy-D-xylulose 5-phosphate site.

This sequence belongs to the ThiG family. In terms of assembly, homotetramer. Forms heterodimers with either ThiH or ThiS.

It is found in the plastid. Its subcellular location is the chloroplast. It carries out the reaction [ThiS sulfur-carrier protein]-C-terminal-Gly-aminoethanethioate + 2-iminoacetate + 1-deoxy-D-xylulose 5-phosphate = [ThiS sulfur-carrier protein]-C-terminal Gly-Gly + 2-[(2R,5Z)-2-carboxy-4-methylthiazol-5(2H)-ylidene]ethyl phosphate + 2 H2O + H(+). The protein operates within cofactor biosynthesis; thiamine diphosphate biosynthesis. In terms of biological role, catalyzes the rearrangement of 1-deoxy-D-xylulose 5-phosphate (DXP) to produce the thiazole phosphate moiety of thiamine. Sulfur is provided by the thiocarboxylate moiety of the carrier protein ThiS. In vitro, sulfur can be provided by H(2)S. The protein is Thiazole synthase of Pyropia yezoensis (Susabi-nori).